A 101-amino-acid polypeptide reads, in one-letter code: NAD(P)H-quinone oxidoreductase subunit 4L, chloroplastic (101 aa).

3 helical membrane-spanning segments follow: residues 2 to 22, 32 to 52, and 61 to 81; these read ILEH…YGLI, MCLE…SDFF, and IFSI…LAIV.

This sequence belongs to the complex I subunit 4L family. NDH is composed of at least 16 different subunits, 5 of which are encoded in the nucleus.

Its subcellular location is the plastid. The protein resides in the chloroplast thylakoid membrane. It catalyses the reaction a plastoquinone + NADH + (n+1) H(+)(in) = a plastoquinol + NAD(+) + n H(+)(out). It carries out the reaction a plastoquinone + NADPH + (n+1) H(+)(in) = a plastoquinol + NADP(+) + n H(+)(out). Functionally, NDH shuttles electrons from NAD(P)H:plastoquinone, via FMN and iron-sulfur (Fe-S) centers, to quinones in the photosynthetic chain and possibly in a chloroplast respiratory chain. The immediate electron acceptor for the enzyme in this species is believed to be plastoquinone. Couples the redox reaction to proton translocation, and thus conserves the redox energy in a proton gradient. The sequence is that of NAD(P)H-quinone oxidoreductase subunit 4L, chloroplastic from Oenothera argillicola (Appalachian evening primrose).